We begin with the raw amino-acid sequence, 779 residues long: Phosphatidylinositol 4-phosphate 5-kinase 4 (779 aa).

The segment at 20-61 (QQAKKRANSIFGTVSVAPQTDDDATTTTEENDDETSTNRSSI) is disordered. Over residues 39-54 (TDDDATTTTEENDDET) the composition is skewed to acidic residues. MORN repeat units follow at residues 77–99 (YTGQ…DGCM), 100–122 (YIGD…SGAT), 123–145 (YEGE…SGDT), 146–168 (YKGQ…NGDV), 169–191 (YDGE…DGSY), 192–214 (YMGE…DGNR), 215–237 (YDGF…DGSF), and 238–259 (YVGH…SGDD). Positions 382 to 775 (TISKGHRNYE…RFRDFIFKVF (394 aa)) constitute a PIPK domain. The activation loop stretch occupies residues 735-756 (YDISKKLEHAYKSIQYDPTSIS).

It carries out the reaction a 1,2-diacyl-sn-glycero-3-phospho-(1D-myo-inositol 4-phosphate) + ATP = a 1,2-diacyl-sn-glycero-3-phospho-(1D-myo-inositol-4,5-bisphosphate) + ADP + H(+). The polypeptide is Phosphatidylinositol 4-phosphate 5-kinase 4 (PIP5K4) (Arabidopsis thaliana (Mouse-ear cress)).